Consider the following 342-residue polypeptide: tRNA dimethylallyltransferase (342 aa).

The segment at 1 to 30 (MSANGPAAEPADGGRAVPAGGGEAVPAGGG) is disordered. A compositionally biased stretch (gly residues) spans 19 to 30 (AGGGEAVPAGGG). 49–56 (GPTAAGKS) is a binding site for ATP. 51 to 56 (TAAGKS) contacts substrate. Residues 74 to 77 (DSMQ) are interaction with substrate tRNA.

It belongs to the IPP transferase family. In terms of assembly, monomer. Mg(2+) is required as a cofactor.

It catalyses the reaction adenosine(37) in tRNA + dimethylallyl diphosphate = N(6)-dimethylallyladenosine(37) in tRNA + diphosphate. Catalyzes the transfer of a dimethylallyl group onto the adenine at position 37 in tRNAs that read codons beginning with uridine, leading to the formation of N6-(dimethylallyl)adenosine (i(6)A). The protein is tRNA dimethylallyltransferase of Salinispora arenicola (strain CNS-205).